The following is a 289-amino-acid chain: Homeobox protein Nkx-2.6 (289 aa).

Disordered stretches follow at residues 75–125 (GSNP…PQRK) and 259–289 (TPLA…VTAW). Positions 123 to 182 (QRKSRVLFSQAQVLALERRFKQQRYLTAPEREHLASALQLTSTQVKIWFQNRRYKSKSQR) form a DNA-binding region, homeobox. Positions 261 to 274 (LASSGFSPGGQSAA) are enriched in polar residues.

Belongs to the NK-2 homeobox family. As to expression, not detected in any neonate or adult tissues.

It localises to the nucleus. Its function is as follows. Acts as a transcriptional activator. In conjunction with NKX2-5, may play a role in both pharyngeal and cardiac embryonic development. The protein is Homeobox protein Nkx-2.6 (Nkx2-6) of Mus musculus (Mouse).